A 200-amino-acid chain; its full sequence is Pyridoxine/pyridoxamine 5'-phosphate oxidase (200 aa).

FMN is bound by residues 48–53 (RMVLLK), 63–64 (YT), lysine 70, and glutamine 92. A substrate-binding site is contributed by lysine 53. Positions 110, 114, and 118 each coordinate substrate. Residues 127-128 (QS) and tryptophan 171 contribute to the FMN site. 177-179 (RLH) serves as a coordination point for substrate. FMN is bound at residue arginine 181.

Belongs to the pyridoxamine 5'-phosphate oxidase family. In terms of assembly, homodimer. FMN serves as cofactor.

It catalyses the reaction pyridoxamine 5'-phosphate + O2 + H2O = pyridoxal 5'-phosphate + H2O2 + NH4(+). It carries out the reaction pyridoxine 5'-phosphate + O2 = pyridoxal 5'-phosphate + H2O2. It functions in the pathway cofactor metabolism; pyridoxal 5'-phosphate salvage; pyridoxal 5'-phosphate from pyridoxamine 5'-phosphate: step 1/1. Its pathway is cofactor metabolism; pyridoxal 5'-phosphate salvage; pyridoxal 5'-phosphate from pyridoxine 5'-phosphate: step 1/1. Functionally, catalyzes the oxidation of either pyridoxine 5'-phosphate (PNP) or pyridoxamine 5'-phosphate (PMP) into pyridoxal 5'-phosphate (PLP). The protein is Pyridoxine/pyridoxamine 5'-phosphate oxidase of Cereibacter sphaeroides (strain ATCC 17023 / DSM 158 / JCM 6121 / CCUG 31486 / LMG 2827 / NBRC 12203 / NCIMB 8253 / ATH 2.4.1.) (Rhodobacter sphaeroides).